Reading from the N-terminus, the 445-residue chain is Tubulin beta-4 chain (445 aa).

GTP-binding residues include Q11, E69, S138, G142, T143, G144, N204, and N226. E69 is a Mg(2+) binding site. The segment at 421-445 (EYQQYQDATADEEYDEEEEEERDAE) is disordered. Over residues 429-445 (TADEEYDEEEEEERDAE) the composition is skewed to acidic residues.

This sequence belongs to the tubulin family. In terms of assembly, dimer of alpha and beta chains. A typical microtubule is a hollow water-filled tube with an outer diameter of 25 nm and an inner diameter of 15 nM. Alpha-beta heterodimers associate head-to-tail to form protofilaments running lengthwise along the microtubule wall with the beta-tubulin subunit facing the microtubule plus end conferring a structural polarity. Microtubules usually have 13 protofilaments but different protofilament numbers can be found in some organisms and specialized cells. It depends on Mg(2+) as a cofactor.

The protein localises to the cytoplasm. It localises to the cytoskeleton. Its function is as follows. Tubulin is the major constituent of microtubules, a cylinder consisting of laterally associated linear protofilaments composed of alpha- and beta-tubulin heterodimers. Microtubules grow by the addition of GTP-tubulin dimers to the microtubule end, where a stabilizing cap forms. Below the cap, tubulin dimers are in GDP-bound state, owing to GTPase activity of alpha-tubulin. The protein is Tubulin beta-4 chain (TUBB4) of Triticum aestivum (Wheat).